Consider the following 206-residue polypeptide: Histidine biosynthesis bifunctional protein HisIE (206 aa).

Positions 1–114 (MLKKINFIDI…FQVPSENLFF (114 aa)) are phosphoribosyl-AMP cyclohydrolase. The segment at 115–206 (LHDLDCMLKF…NLKMRSNKQV (92 aa)) is phosphoribosyl-ATP pyrophosphohydrolase.

The protein in the N-terminal section; belongs to the PRA-CH family. In the C-terminal section; belongs to the PRA-PH family.

It localises to the cytoplasm. The enzyme catalyses 1-(5-phospho-beta-D-ribosyl)-ATP + H2O = 1-(5-phospho-beta-D-ribosyl)-5'-AMP + diphosphate + H(+). The catalysed reaction is 1-(5-phospho-beta-D-ribosyl)-5'-AMP + H2O = 1-(5-phospho-beta-D-ribosyl)-5-[(5-phospho-beta-D-ribosylamino)methylideneamino]imidazole-4-carboxamide. Its pathway is amino-acid biosynthesis; L-histidine biosynthesis; L-histidine from 5-phospho-alpha-D-ribose 1-diphosphate: step 2/9. It participates in amino-acid biosynthesis; L-histidine biosynthesis; L-histidine from 5-phospho-alpha-D-ribose 1-diphosphate: step 3/9. The sequence is that of Histidine biosynthesis bifunctional protein HisIE (hisI) from Buchnera aphidicola subsp. Baizongia pistaciae (strain Bp).